The following is a 256-amino-acid chain: Pimeloyl-[acyl-carrier protein] methyl ester esterase (256 aa).

The AB hydrolase-1 domain occupies 16 to 240 (LVILHGWGVN…PKASHAPFLS (225 aa)). Residues W22, 80 to 81 (SL), and 143 to 147 (FLAIQ) each bind substrate. S80 functions as the Nucleophile in the catalytic mechanism. Active-site residues include D207 and H235. Residue H235 participates in substrate binding.

The protein belongs to the AB hydrolase superfamily. Carboxylesterase BioH family. As to quaternary structure, monomer.

Its subcellular location is the cytoplasm. It carries out the reaction 6-carboxyhexanoyl-[ACP] methyl ester + H2O = 6-carboxyhexanoyl-[ACP] + methanol + H(+). The protein operates within cofactor biosynthesis; biotin biosynthesis. The physiological role of BioH is to remove the methyl group introduced by BioC when the pimeloyl moiety is complete. It allows to synthesize pimeloyl-ACP via the fatty acid synthetic pathway through the hydrolysis of the ester bonds of pimeloyl-ACP esters. The polypeptide is Pimeloyl-[acyl-carrier protein] methyl ester esterase (Shewanella woodyi (strain ATCC 51908 / MS32)).